The chain runs to 507 residues: ATP synthase subunit alpha (507 aa).

168–175 (GDRKTGKT) serves as a coordination point for ATP.

It belongs to the ATPase alpha/beta chains family. F-type ATPases have 2 components, CF(1) - the catalytic core - and CF(0) - the membrane proton channel. CF(1) has five subunits: alpha(3), beta(3), gamma(1), delta(1), epsilon(1). CF(0) has three main subunits: a(1), b(2) and c(9-12). The alpha and beta chains form an alternating ring which encloses part of the gamma chain. CF(1) is attached to CF(0) by a central stalk formed by the gamma and epsilon chains, while a peripheral stalk is formed by the delta and b chains.

Its subcellular location is the cell inner membrane. It carries out the reaction ATP + H2O + 4 H(+)(in) = ADP + phosphate + 5 H(+)(out). Functionally, produces ATP from ADP in the presence of a proton gradient across the membrane. The alpha chain is a regulatory subunit. This is ATP synthase subunit alpha from Ehrlichia ruminantium (strain Gardel).